A 147-amino-acid chain; its full sequence is Acidic phospholipase A2 1 (147 aa).

An N-terminal signal peptide occupies residues 1 to 19; the sequence is MNPAHLLVLAAVCVSLLGA. Residues 20–27 constitute a propeptide that is removed on maturation; the sequence is AIVPPQPL. Disulfide bonds link Cys-38-Cys-99, Cys-54-Cys-146, Cys-56-Cys-72, Cys-71-Cys-127, Cys-78-Cys-120, Cys-88-Cys-113, and Cys-106-Cys-118. 3 residues coordinate Ca(2+): Tyr-55, Gly-57, and Gly-59. Residue His-75 is part of the active site. Asp-76 is a Ca(2+) binding site. Asp-121 is an active-site residue.

Belongs to the phospholipase A2 family. Group I subfamily. D49 sub-subfamily. The cofactor is Ca(2+). Expressed by the venom gland.

The protein localises to the secreted. The catalysed reaction is a 1,2-diacyl-sn-glycero-3-phosphocholine + H2O = a 1-acyl-sn-glycero-3-phosphocholine + a fatty acid + H(+). PLA2 catalyzes the calcium-dependent hydrolysis of the 2-acyl groups in 3-sn-phosphoglycerides. This is Acidic phospholipase A2 1 from Bungarus flaviceps flaviceps (Red-headed krait).